Consider the following 304-residue polypeptide: Acetyl-coenzyme A carboxylase carboxyl transferase subunit beta (304 aa).

The region spanning 23-292 is the CoA carboxyltransferase N-terminal domain; sequence VWTKCDSCGQ…PNPEAPREGV (270 aa). Residues cysteine 27, cysteine 30, cysteine 46, and cysteine 49 each contribute to the Zn(2+) site. The segment at 27 to 49 adopts a C4-type zinc-finger fold; it reads CDSCGQVLYRAELERNLEVCPKC. The segment at 284-304 is disordered; the sequence is NPEAPREGVVVPPVPDQEPEA. Residues 295–304 show a composition bias toward pro residues; it reads PPVPDQEPEA.

This sequence belongs to the AccD/PCCB family. In terms of assembly, acetyl-CoA carboxylase is a heterohexamer composed of biotin carboxyl carrier protein (AccB), biotin carboxylase (AccC) and two subunits each of ACCase subunit alpha (AccA) and ACCase subunit beta (AccD). Zn(2+) serves as cofactor.

The protein localises to the cytoplasm. It carries out the reaction N(6)-carboxybiotinyl-L-lysyl-[protein] + acetyl-CoA = N(6)-biotinyl-L-lysyl-[protein] + malonyl-CoA. It participates in lipid metabolism; malonyl-CoA biosynthesis; malonyl-CoA from acetyl-CoA: step 1/1. Component of the acetyl coenzyme A carboxylase (ACC) complex. Biotin carboxylase (BC) catalyzes the carboxylation of biotin on its carrier protein (BCCP) and then the CO(2) group is transferred by the transcarboxylase to acetyl-CoA to form malonyl-CoA. The polypeptide is Acetyl-coenzyme A carboxylase carboxyl transferase subunit beta (Shigella boydii serotype 4 (strain Sb227)).